We begin with the raw amino-acid sequence, 78 residues long: Acyl carrier protein (78 aa).

The 76-residue stretch at 2–77 (SNIEERVKKI…AAIDYVTSNA (76 aa)) folds into the Carrier domain. The residue at position 37 (serine 37) is an O-(pantetheine 4'-phosphoryl)serine.

It belongs to the acyl carrier protein (ACP) family. Post-translationally, 4'-phosphopantetheine is transferred from CoA to a specific serine of apo-ACP by AcpS. This modification is essential for activity because fatty acids are bound in thioester linkage to the sulfhydryl of the prosthetic group.

The protein resides in the cytoplasm. It participates in lipid metabolism; fatty acid biosynthesis. Its function is as follows. Carrier of the growing fatty acid chain in fatty acid biosynthesis. The polypeptide is Acyl carrier protein (Vibrio cholerae serotype O1 (strain ATCC 39315 / El Tor Inaba N16961)).